Reading from the N-terminus, the 261-residue chain is Cytosolic Fe-S cluster assembly factor Nubp2 homolog (261 aa).

Residue 14 to 21 (GKGGVGKS) participates in ATP binding. Positions 188 and 191 each coordinate [4Fe-4S] cluster.

This sequence belongs to the Mrp/NBP35 ATP-binding proteins family. NUBP2/CFD1 subfamily. Heterotetramer of 2 Nubp1 and 2 Nubp2 chains. The cofactor is [4Fe-4S] cluster.

It localises to the cytoplasm. Functionally, component of the cytosolic iron-sulfur (Fe/S) protein assembly (CIA) machinery. Required for maturation of extramitochondrial Fe-S proteins. The Nubp1-Nubp2 heterotetramer forms a Fe-S scaffold complex, mediating the de novo assembly of an Fe-S cluster and its transfer to target apoproteins. The chain is Cytosolic Fe-S cluster assembly factor Nubp2 homolog from Drosophila ananassae (Fruit fly).